The primary structure comprises 64 residues: Large ribosomal subunit protein bL33 (64 aa).

The protein belongs to the bacterial ribosomal protein bL33 family.

This chain is Large ribosomal subunit protein bL33, found in Microcystis aeruginosa (strain NIES-843 / IAM M-2473).